Here is a 343-residue protein sequence, read N- to C-terminus: Anthranilate phosphoribosyltransferase (343 aa).

5-phospho-alpha-D-ribose 1-diphosphate-binding positions include Gly-83, 86–87, Thr-91, 93–96, 111–119, and Ser-123; these read GD, NIST, and KHGGRSVSS. Gly-83 is a binding site for anthranilate. A Mg(2+)-binding site is contributed by Ser-95. Residue Arg-169 coordinates anthranilate. Residues Asp-228 and Glu-229 each contribute to the Mg(2+) site.

The protein belongs to the anthranilate phosphoribosyltransferase family. Homodimer. Requires Mg(2+) as cofactor.

The catalysed reaction is N-(5-phospho-beta-D-ribosyl)anthranilate + diphosphate = 5-phospho-alpha-D-ribose 1-diphosphate + anthranilate. Its pathway is amino-acid biosynthesis; L-tryptophan biosynthesis; L-tryptophan from chorismate: step 2/5. Functionally, catalyzes the transfer of the phosphoribosyl group of 5-phosphorylribose-1-pyrophosphate (PRPP) to anthranilate to yield N-(5'-phosphoribosyl)-anthranilate (PRA). This chain is Anthranilate phosphoribosyltransferase, found in Thiobacillus denitrificans (strain ATCC 25259 / T1).